The primary structure comprises 133 residues: 14 kDa fatty acid-binding protein (133 aa).

(5Z,8Z,11Z,14Z)-eicosatetraenoate-binding positions include Arg107 and 127 to 129; that span reads RNY. Residues Arg107 and 127 to 129 contribute to the (9Z)-octadecenoate site; that span reads RNY.

The protein belongs to the calycin superfamily. Fatty-acid binding protein (FABP) family. In terms of tissue distribution, tubercles, muscle layers and body.

It is found in the cytoplasm. In terms of biological role, may play a role in the transport of fatty acids. Binds various fatty acids, such as arachidonic, oleic, palmitic and linolenic acid (in vitro). The sequence is that of 14 kDa fatty acid-binding protein from Schistosoma mansoni (Blood fluke).